A 155-amino-acid chain; its full sequence is Protein archease-like (155 aa).

Ca(2+) is bound by residues Asp-26, Asp-154, and Ile-155.

The protein belongs to the archease family.

Functionally, component of the tRNA-splicing ligase complex required to facilitate the enzymatic turnover of catalytic subunit RtcB. This is Protein archease-like from Caenorhabditis briggsae.